We begin with the raw amino-acid sequence, 475 residues long: UDP-N-acetylmuramoylalanine--D-glutamate ligase (475 aa).

130 to 136 (GTNGKTT) is an ATP binding site.

This sequence belongs to the MurCDEF family.

The protein resides in the cytoplasm. It catalyses the reaction UDP-N-acetyl-alpha-D-muramoyl-L-alanine + D-glutamate + ATP = UDP-N-acetyl-alpha-D-muramoyl-L-alanyl-D-glutamate + ADP + phosphate + H(+). The protein operates within cell wall biogenesis; peptidoglycan biosynthesis. Cell wall formation. Catalyzes the addition of glutamate to the nucleotide precursor UDP-N-acetylmuramoyl-L-alanine (UMA). This chain is UDP-N-acetylmuramoylalanine--D-glutamate ligase, found in Corynebacterium diphtheriae (strain ATCC 700971 / NCTC 13129 / Biotype gravis).